Consider the following 858-residue polypeptide: MGRGIGSKRRVEDDDGENMPGRKKKEEEEEEEDDDGEEEYEVDVVRDRIGSSRGSRLALFGSDLRLGRFRPRRRRVAPVDGDDGIFQDFVIDPDNKWYRLWTRFILVWAVYSSFFTPLEFGFFRGLPRNLFFLDIAGQIAFLIDIVLRFFVAYRDPDTYRMVHNPTSIALRYCKSSFIFDLLGCFPWDAIYKACGSKEEVRYLLWIRLTRAMKVTEFFRSMEKDIRINYLFTRIVKLIVVELYCTHTAACIFYYLATTLPESMEGYTWIGSLQLGDYSYSHFREIDLTKRYMTSLYFAIVTMATVGYGDIHAVNVREMIFIMIYVSFDMILGAYLIGNMTALIVKGSRTERFRDKMKEVIRYMNRNKLGKDIREQIKGHLRLQYESSYTEASVLQDIPVSIRAKISQTLYKPYIESIPLFKGCSAEFIQQIVIRLQEEFFLPGEVILEQGSAVDQLYFVCHGALEGVGIGEDGQEETILMLEPESSFGEIAVLCNIPQPFTVRVCELCRLLRLDKQSFTNILEIFFVDGRRILSNLSESSEYGSRIKQLESDITFHIGKQEAELTLRVNNAAFYGDMHQLKSLIRAGADPKNTDYDGRSPLHLAACKGFEDVVQFLLHEGVDIDLSDKFGNTPLLEAVKQGHDRVATLLFSKGAKLSLENAGSHLCTAVARGDTDFVRRALAYGGDPNARDYDHRAPLHIAAAEGLYLMAKLLVDAGASVFATDRWGTTPLDEGRRCGSRTMVQLLEAAKSGELSRYPERGEEVRDKMHPRRCSVFPHHPWDGGERRREGVVVWIPHTIEGLVSSAQEKLGLAGSGEGLRLLGEDGARVLDVDMVHDGQKLYLVVGGGGDDGGTEARQ.

Positions 1 to 41 (MGRGIGSKRRVEDDDGENMPGRKKKEEEEEEEDDDGEEEYE) are disordered. The Cytoplasmic portion of the chain corresponds to 1-102 (MGRGIGSKRR…PDNKWYRLWT (102 aa)). A compositionally biased stretch (acidic residues) spans 27-41 (EEEEEEDDDGEEEYE). The chain crosses the membrane as a helical span at residues 103–123 (RFILVWAVYSSFFTPLEFGFF). Topologically, residues 124–130 (RGLPRNL) are extracellular. Residues 131-151 (FFLDIAGQIAFLIDIVLRFFV) traverse the membrane as a helical segment. Topologically, residues 152–174 (AYRDPDTYRMVHNPTSIALRYCK) are cytoplasmic. A helical membrane pass occupies residues 175–195 (SSFIFDLLGCFPWDAIYKACG). The Extracellular portion of the chain corresponds to 196 to 201 (SKEEVR). The helical; Voltage-sensor transmembrane segment at 202–222 (YLLWIRLTRAMKVTEFFRSME) threads the bilayer. The Cytoplasmic portion of the chain corresponds to 223–236 (KDIRINYLFTRIVK). Residues 237–257 (LIVVELYCTHTAACIFYYLAT) form a helical membrane-spanning segment. The Extracellular portion of the chain corresponds to 258-292 (TLPESMEGYTWIGSLQLGDYSYSHFREIDLTKRYM). The segment at residues 293–312 (TSLYFAIVTMATVGYGDIHA) is an intramembrane region (pore-forming). Over 313-316 (VNVR) the chain is Extracellular. A helical transmembrane segment spans residues 317 to 337 (EMIFIMIYVSFDMILGAYLIG). Residues 338–858 (NMTALIVKGS…GDDGGTEARQ (521 aa)) are Cytoplasmic-facing. A nucleoside 3',5'-cyclic phosphate is bound at residue 419–539 (LFKGCSAEFI…RRILSNLSES (121 aa)). ANK repeat units follow at residues 559 to 592 (KQEA…DPKN), 596 to 625 (DGRS…DIDL), 629 to 658 (FGNT…KLSL), 660 to 689 (NAGS…DPNA), 693 to 722 (DHRA…SVFA), and 726 to 756 (WGTT…ELSR). Residues 772–858 (RCSVFPHHPW…GDDGGTEARQ (87 aa)) form the KHA domain.

The protein belongs to the potassium channel family. Plant (TC 1.A.1.4) subfamily.

It localises to the membrane. Its function is as follows. Probable outward-rectifying potassium channel. This Oryza sativa subsp. japonica (Rice) protein is Potassium channel KOR1.